Reading from the N-terminus, the 75-residue chain is Putative defensin-like protein 126 (75 aa).

The signal sequence occupies residues 1–24 (MSKSTFLFVYIILILGSMVNEIQG). Disulfide bonds link C29-C73, C38-C57, C43-C67, and C47-C69.

The protein belongs to the DEFL family.

The protein localises to the secreted. This is Putative defensin-like protein 126 (LCR6) from Arabidopsis thaliana (Mouse-ear cress).